A 127-amino-acid polypeptide reads, in one-letter code: Riboflavin kinase (127 aa).

Position 10-15 (10-15 (GLGEGR)) interacts with CDP. Positions 39 and 41 each coordinate Mg(2+). FMN is bound by residues Thr96 and Glu104. 109–112 (VHLR) serves as a coordination point for CDP.

This sequence belongs to the archaeal riboflavin kinase family. Requires Mg(2+) as cofactor.

It catalyses the reaction riboflavin + CTP = CDP + FMN + H(+). The protein operates within cofactor biosynthesis; FMN biosynthesis; FMN from riboflavin (CTP route): step 1/1. Its function is as follows. Catalyzes the CTP-dependent phosphorylation of riboflavin (vitamin B2) to form flavin mononucleotide (FMN). In Methanococcus maripaludis (strain C7 / ATCC BAA-1331), this protein is Riboflavin kinase.